A 187-amino-acid chain; its full sequence is Peptide deformylase 2 (187 aa).

Residues Cys107 and His149 each contribute to the Fe cation site. The active site involves Glu150. A Fe cation-binding site is contributed by His153.

Belongs to the polypeptide deformylase family. The cofactor is Fe(2+).

It catalyses the reaction N-terminal N-formyl-L-methionyl-[peptide] + H2O = N-terminal L-methionyl-[peptide] + formate. In terms of biological role, removes the formyl group from the N-terminal Met of newly synthesized proteins. Requires at least a dipeptide for an efficient rate of reaction. N-terminal L-methionine is a prerequisite for activity but the enzyme has broad specificity at other positions. This chain is Peptide deformylase 2, found in Gloeobacter violaceus (strain ATCC 29082 / PCC 7421).